The chain runs to 478 residues: Glutamine synthetase (478 aa).

The 85-residue stretch at 16 to 100 folds into the GS beta-grasp domain; the sequence is EKVEYVDVRF…INFFVHDPFT (85 aa). Residues 108 to 478 form the GS catalytic domain; sequence PRNIARKAEN…PYEFALYYDV (371 aa). Mg(2+) is bound by residues Glu-133 and Glu-135. Position 214 (Glu-214) interacts with ATP. Residues Glu-219 and Glu-227 each coordinate Mg(2+). An ATP-binding site is contributed by 230-232; it reads YQF. L-glutamate-binding positions include 271-272 and Gly-272; that span reads NG. His-276 contributes to the Mg(2+) binding site. ATP is bound by residues 278–280 and Ser-280; that span reads HQS. 3 residues coordinate L-glutamate: Arg-329, Glu-335, and Arg-347. Positions 347, 352, and 361 each coordinate ATP. Glu-366 is a binding site for Mg(2+). Arg-368 serves as a coordination point for L-glutamate. Residue Tyr-406 is modified to O-AMP-tyrosine.

It belongs to the glutamine synthetase family. As to quaternary structure, oligomer of 12 subunits arranged in the form of two hexagons. Mg(2+) is required as a cofactor.

It localises to the cytoplasm. The catalysed reaction is L-glutamate + NH4(+) + ATP = L-glutamine + ADP + phosphate + H(+). With respect to regulation, when cellular nitrogen levels are high, the C-terminal adenylyl transferase (AT) of GlnE inhibits GlnA by covalent transfer of an adenylyl group from ATP to Tyr-406. Conversely, when nitrogen levels are low, the N-terminal adenylyl removase (AR) of GlnE activates GlnA by removing the adenylyl group by phosphorolysis. The fully adenylated enzyme complex is inactive. Involved in nitrogen metabolism via ammonium assimilation. Catalyzes the ATP-dependent biosynthesis of glutamine from glutamate and ammonia. Also plays a key role in controlling the ammonia levels within infected host cells and so contributes to the pathogens capacity to inhibit phagosome acidification and phagosome-lysosome fusion. Involved in cell wall biosynthesis via the production of the major component poly-L-glutamine (PLG). PLG synthesis in the cell wall occurs only in nitrogen limiting conditions and on the contrary high nitrogen conditions inhibit PLG synthesis. The protein is Glutamine synthetase of Mycobacterium bovis (strain ATCC BAA-935 / AF2122/97).